The primary structure comprises 418 residues: Protease LasA (418 aa).

Residues 1 to 31 form the signal peptide; sequence MQHKRSRAMASPRSPFLFVLLALAVGGTANA. Residues 32 to 236 constitute a propeptide that is removed on maturation; sequence HDDGLPAFRY…ARQLQAKAAL (205 aa). Zn(2+)-binding residues include His-259 and Asp-272. Cysteines 301 and 347 form a disulfide. Residues His-317 and His-356 each act as proton donor/acceptor in the active site. His-358 lines the Zn(2+) pocket. Cysteines 391 and 406 form a disulfide.

Belongs to the peptidase M23A family. Zn(2+) serves as cofactor. In terms of processing, processing of pro-LasA can occur extracellularly and requires elastase (lasB). Secretion and processing may be linked.

It is found in the secreted. Its function is as follows. Involved in proteolysis and elastolysis (degradation of the host protein elastin). Has staphylolytic activity (degrades pentaglycine cross-links in cell wall peptidoglycan), preferring Gly-Gly-|-X substrates where X is Ala or Gly. Enhances the elastolytic but not proteolytic activity of elastase (lasB) and elastolytic activity of other proteases. Degradation of host elastin is likely to contribute to the pathogenicity of P.aeruginosa. While either His-317 or His-356 can abstract a proton in the hydrolysis reaction, the same residue performs both functions in a given catalytic cycle, with the other stabilizing the catalytic intermediate. The polypeptide is Protease LasA (lasA) (Pseudomonas aeruginosa (strain ATCC 15692 / DSM 22644 / CIP 104116 / JCM 14847 / LMG 12228 / 1C / PRS 101 / PAO1)).